The primary structure comprises 430 residues: NAD(P)(+) glycohydrolase toxin Tse6 (430 aa).

Helical transmembrane passes span 17–37, 46–66, and 193–213; these read FGVA…AAVV, LAAV…FQIV, and LLLA…IGGL.

As to quaternary structure, interacts with Tsi6, VgrG1a, EagT6 and EF-Tu.

It localises to the membrane. The enzyme catalyses NAD(+) + H2O = ADP-D-ribose + nicotinamide + H(+). Functionally, type VI secretion exported toxin that acts as a glycohydrolase on bacterial target cells and degrades the essential dinucleotides NAD(+) and NADP(+), thereby inducing bacteriostasis. The activity resides in the C-terminal region that is initially neutralized by the cognate immunity protein Tsi6. This Pseudomonas aeruginosa (strain ATCC 15692 / DSM 22644 / CIP 104116 / JCM 14847 / LMG 12228 / 1C / PRS 101 / PAO1) protein is NAD(P)(+) glycohydrolase toxin Tse6.